Reading from the N-terminus, the 364-residue chain is L-carnitine dehydrogenase (364 aa).

Gly-11–Gly-16 provides a ligand contact to NAD(+). The tract at residues Lys-336–Gly-364 is disordered. Over residues Ala-348–Gly-364 the composition is skewed to basic residues.

Belongs to the 3-hydroxyacyl-CoA dehydrogenase family. L-carnitine dehydrogenase subfamily. Homodimer.

It is found in the cytoplasm. It carries out the reaction carnitine + NAD(+) = 3-dehydrocarnitine + NADH + H(+). It participates in amine and polyamine metabolism; carnitine metabolism. Catalyzes the NAD(+)-dependent oxidation of L-carnitine to 3-dehydrocarnitine. The protein is L-carnitine dehydrogenase of Mesorhizobium japonicum (strain LMG 29417 / CECT 9101 / MAFF 303099) (Mesorhizobium loti (strain MAFF 303099)).